Consider the following 717-residue polypeptide: MRKILKLKIGREDLILETGLLAKQANGAVLATYGGSTVLATVCCSDSIRENLDFVPLSVEYNEKYYAAGKIPGGFIKREGKPKDKEVLVSRLIDRPMRPLFDKRFGREIQVVPTTLSTDQMNPPDIVGMNAAFTAVFLSDIPFNGPIAAVRIAYLNDEFIVNPSFDEIQDSVLDIVVAGSLDGITMVEGGANEVSEEILLDAIDKAYAYIKQICDLQKEFIYLIGEREKLPLAYEEKVFEFKDDLRSLIYSELKDACFVRGKLNRDKAIKLVKQKAYEHFSSLEQINDENEILFYKACDDFEQEIVRKSILEDNLRTDGRTPTQIRDIIAEVDLLKRTHGSALFTRGETQALAVTTLGTSIDEQVMDDIDGDKRLNFMLHYNFPPFSVGETGRLMTGRREIGHGHLAQRSLEAMLPKKDDFPYTIRVVSEVLESNGSSSMATVCSGSMSLMAAGVPVKEQVAGIAMGLISNDDKYVILSDILGEEDHLGDMDFKVAGTKNGITGFQMDIKISNVTKQLMRDALEQARIGRMHILSIMDSVISSSRGDISVNAPKIVQLQIDIDKISLVIGSTGKTVKAITDEFEVRVQIEQDGRITLFGTDNLKMQKAKAKIESIVREPKVGEIYDGIVKKINSFGAFIELTPTKEGFLSNRSRSRDDRYGSDIRHSRYSNRNSRYGRDNRSSFSMRFPRLEEGQIVKVRISDIDKFGKIELELARD.

Asp-486 and Asp-492 together coordinate Mg(2+). The KH domain maps to 553 to 612 (PKIVQLQIDIDKISLVIGSTGKTVKAITDEFEVRVQIEQDGRITLFGTDNLKMQKAKAKI). One can recognise an S1 motif domain in the interval 622–715 (GEIYDGIVKK…KFGKIELELA (94 aa)). The disordered stretch occupies residues 650-681 (SNRSRSRDDRYGSDIRHSRYSNRNSRYGRDNR). The span at 654–666 (RSRDDRYGSDIRH) shows a compositional bias: basic and acidic residues.

This sequence belongs to the polyribonucleotide nucleotidyltransferase family. Mg(2+) is required as a cofactor.

It localises to the cytoplasm. The enzyme catalyses RNA(n+1) + phosphate = RNA(n) + a ribonucleoside 5'-diphosphate. Its function is as follows. Involved in mRNA degradation. Catalyzes the phosphorolysis of single-stranded polyribonucleotides processively in the 3'- to 5'-direction. In Borrelia duttonii (strain Ly), this protein is Polyribonucleotide nucleotidyltransferase.